A 298-amino-acid polypeptide reads, in one-letter code: Cyclin-dependent kinase 2 homolog (298 aa).

In terms of domain architecture, Protein kinase spans 4–284; the sequence is YHKMEKIGEG…AKEALKHDYF (281 aa). Residues 10–18 and Lys32 each bind ATP; that span reads IGEGTYGVV. The residue at position 14 (Thr14) is a Phosphothreonine. Residue Tyr15 is modified to Phosphotyrosine. The active-site Proton acceptor is Asp125. Position 158 is a phosphothreonine (Thr158).

Belongs to the protein kinase superfamily. CMGC Ser/Thr protein kinase family. CDC2/CDKX subfamily. As to quaternary structure, may form a complex composed of at least the catalytic subunit CRK2 and a cyclin. Mg(2+) is required as a cofactor.

The protein localises to the cytoplasm. It carries out the reaction L-seryl-[protein] + ATP = O-phospho-L-seryl-[protein] + ADP + H(+). The enzyme catalyses L-threonyl-[protein] + ATP = O-phospho-L-threonyl-[protein] + ADP + H(+). It catalyses the reaction [DNA-directed RNA polymerase] + ATP = phospho-[DNA-directed RNA polymerase] + ADP + H(+). Its activity is regulated as follows. Phosphorylation at Thr-14 or Tyr-15 inactivates the enzyme, while phosphorylation at Thr-158 activates it. Its function is as follows. Serine/threonine-protein kinase. Involved in the control of the cell cycle. Required for entry into S-phase and mitosis. Probable component of the kinase complex that phosphorylates the repetitive C-terminus of RNA polymerase II. The protein is Cyclin-dependent kinase 2 homolog of Theileria parva (East coast fever infection agent).